The following is a 198-amino-acid chain: Recombination protein RecR (198 aa).

A C4-type zinc finger spans residues 57–72 (CSICGRLTDDDPCSIC). The region spanning 80–175 (TTILVLEDSR…KVTRLARGLA (96 aa)) is the Toprim domain.

The protein belongs to the RecR family.

Its function is as follows. May play a role in DNA repair. It seems to be involved in an RecBC-independent recombinational process of DNA repair. It may act with RecF and RecO. The sequence is that of Recombination protein RecR from Streptococcus pneumoniae (strain 70585).